The chain runs to 356 residues: Uroporphyrinogen decarboxylase (356 aa).

Substrate-binding positions include 27–31, aspartate 77, tyrosine 154, threonine 209, and histidine 327; that span reads RQAGR.

The protein belongs to the uroporphyrinogen decarboxylase family. In terms of assembly, homodimer.

It localises to the cytoplasm. The catalysed reaction is uroporphyrinogen III + 4 H(+) = coproporphyrinogen III + 4 CO2. Its pathway is porphyrin-containing compound metabolism; protoporphyrin-IX biosynthesis; coproporphyrinogen-III from 5-aminolevulinate: step 4/4. Its function is as follows. Catalyzes the decarboxylation of four acetate groups of uroporphyrinogen-III to yield coproporphyrinogen-III. The polypeptide is Uroporphyrinogen decarboxylase (Hamiltonella defensa subsp. Acyrthosiphon pisum (strain 5AT)).